Consider the following 442-residue polypeptide: MAIIQLGSTCVAQWSIRPQFAVRAYYPSRIESTRHQNSSSQVNCLGASKSSMFSHGSLPFLSMTGMSRNMHPPRRGSRFTVRADADYYSVLGVSKNATKAEIKSAYRKLARNYHPDVNKDPGAEEKFKEISNAYEVLSDDEKKSLYDRYGEAGLKGAAGFGNGDFSNPFDLFDSLFEGFGGGMGRGSRSRAVDGQDEYYTLILNFKEAVFGMEKEIEISRLESCGTCEGSGAKPGTKPTKCTTCGGQGQVVSAARTPLGVFQQVMTCSSCNGTGEISTPCGTCSGDGRVRKTKRISLKVPAGVDSGSRLRVRGEGNAGKRGGSPGDLFVVIEVIPDPILKRDDTNILYTCKISYIDAILGTTLKVPTVDGTVDLKVPAGTQPSTTLVMAKKGVPVLNKSNMRGDQLVRVQVEIPKRLSKEEKKLIEELADMSKNKTANSTSR.

Residues 1–82 constitute a chloroplast transit peptide; the sequence is MAIIQLGSTC…PRRGSRFTVR (82 aa). The region spanning 86–150 is the J domain; it reads DYYSVLGVSK…EKKSLYDRYG (65 aa). The CR-type zinc finger occupies 211–292; sequence GMEKEIEISR…CSGDGRVRKT (82 aa). Positions 224, 227, 241, 244, 267, 270, 280, and 283 each coordinate Zn(2+). CXXCXGXG motif repeat units lie at residues 224-231, 241-248, 267-274, and 280-287; these read CGTCEGSG, CTTCGGQG, CSSCNGTG, and CGTCSGDG.

It belongs to the DnaJ family.

Its subcellular location is the plastid. It localises to the chloroplast. Its function is as follows. May function together with HSC70 chaperone to assist protein folding and prevent protein aggregation during heat stress in the chloroplast. This chain is Chaperone protein dnaJ A6, chloroplastic, found in Arabidopsis thaliana (Mouse-ear cress).